Here is a 276-residue protein sequence, read N- to C-terminus: Small ribosomal subunit protein uS2 (276 aa).

Residues 226–276 form a disordered region; sequence KKAREERQLAAAREAAGEPKSEDAPAEAAATEEAPATEAPAAEAQQENAAE. Residues 251–276 are compositionally biased toward low complexity; sequence AEAAATEEAPATEAPAAEAQQENAAE.

Belongs to the universal ribosomal protein uS2 family.

The sequence is that of Small ribosomal subunit protein uS2 from Corynebacterium efficiens (strain DSM 44549 / YS-314 / AJ 12310 / JCM 11189 / NBRC 100395).